A 330-amino-acid polypeptide reads, in one-letter code: Lactamase-like protein nscB (330 aa).

The Zn(2+) site is built by H97, H99, D101, and H102. D101 functions as the Proton donor/acceptor in the catalytic mechanism.

Belongs to the metallo-beta-lactamase superfamily. Zn(2+) serves as cofactor.

It functions in the pathway secondary metabolite biosynthesis. Functionally, lactamase-like protein; part of the gene cluster that mediates the biosynthesis of neosartoricin, a prenylated anthracenone that exhibits T-cell antiproliferative activity, suggestive of a physiological role as an immunosuppressive agent. The non-reducing polyketide synthase nscA probably synthesizes and cyclizes the decaketide backbone. The hydrolase nscB then mediates the product release through hydrolysis followed by spontaneous decarboxylation. The prenyltransferase nscD catalyzes the addition of the dimethylallyl group to the aromatic C5. The FAD-dependent monooxygenase nscC is then responsible for the stereospecific hydroxylation at C2. There is no gene encoding O-acetyltransferase in the nsc gene cluster; thus, the last step of 2-O-acetylation leading to neosartoricin may be catalyzed by an unidentified O-acetyltransferase. The protein is Lactamase-like protein nscB of Aspergillus fumigatus (strain ATCC MYA-4609 / CBS 101355 / FGSC A1100 / Af293) (Neosartorya fumigata).